Here is a 244-residue protein sequence, read N- to C-terminus: 1-(5-phosphoribosyl)-5-[(5-phosphoribosylamino)methylideneamino] imidazole-4-carboxamide isomerase (244 aa).

D8 (proton acceptor) is an active-site residue. D129 serves as the catalytic Proton donor.

This sequence belongs to the HisA/HisF family.

The protein localises to the cytoplasm. The catalysed reaction is 1-(5-phospho-beta-D-ribosyl)-5-[(5-phospho-beta-D-ribosylamino)methylideneamino]imidazole-4-carboxamide = 5-[(5-phospho-1-deoxy-D-ribulos-1-ylimino)methylamino]-1-(5-phospho-beta-D-ribosyl)imidazole-4-carboxamide. It participates in amino-acid biosynthesis; L-histidine biosynthesis; L-histidine from 5-phospho-alpha-D-ribose 1-diphosphate: step 4/9. The chain is 1-(5-phosphoribosyl)-5-[(5-phosphoribosylamino)methylideneamino] imidazole-4-carboxamide isomerase from Thermodesulfovibrio yellowstonii (strain ATCC 51303 / DSM 11347 / YP87).